A 397-amino-acid chain; its full sequence is 1-deoxy-D-xylulose 5-phosphate reductoisomerase (397 aa).

NADPH contacts are provided by Ser-10, Gly-11, Ser-12, Ile-13, Ala-36, Arg-37, and Asn-124. Lys-125 contacts 1-deoxy-D-xylulose 5-phosphate. Glu-126 lines the NADPH pocket. Residue Asp-150 coordinates Mn(2+). The 1-deoxy-D-xylulose 5-phosphate site is built by Ser-151, Glu-152, Ser-186, and His-209. Glu-152 contacts Mn(2+). Gly-215 is a binding site for NADPH. 1-deoxy-D-xylulose 5-phosphate-binding residues include Ser-222, Asn-227, Lys-228, and Glu-231. Residue Glu-231 coordinates Mn(2+).

The protein belongs to the DXR family. Requires Mg(2+) as cofactor. It depends on Mn(2+) as a cofactor.

The enzyme catalyses 2-C-methyl-D-erythritol 4-phosphate + NADP(+) = 1-deoxy-D-xylulose 5-phosphate + NADPH + H(+). The protein operates within isoprenoid biosynthesis; isopentenyl diphosphate biosynthesis via DXP pathway; isopentenyl diphosphate from 1-deoxy-D-xylulose 5-phosphate: step 1/6. Catalyzes the NADPH-dependent rearrangement and reduction of 1-deoxy-D-xylulose-5-phosphate (DXP) to 2-C-methyl-D-erythritol 4-phosphate (MEP). The chain is 1-deoxy-D-xylulose 5-phosphate reductoisomerase from Aeromonas salmonicida (strain A449).